The chain runs to 100 residues: MELNPREKDKLLLFTAALLAERRKARGVKLNYPEAIALISAEVMEGARDGKTVAELMEAGRQVLRVEDVMDGIADMIHEVQVEATFPDGTKLVTVHNPIV.

This sequence belongs to the urease gamma subunit family. As to quaternary structure, heterotrimer of UreA (gamma), UreB (beta) and UreC (alpha) subunits. Three heterotrimers associate to form the active enzyme.

Its subcellular location is the cytoplasm. The catalysed reaction is urea + 2 H2O + H(+) = hydrogencarbonate + 2 NH4(+). It participates in nitrogen metabolism; urea degradation; CO(2) and NH(3) from urea (urease route): step 1/1. This Saccharophagus degradans (strain 2-40 / ATCC 43961 / DSM 17024) protein is Urease subunit gamma.